The sequence spans 633 residues: Extracellular metalloproteinase 3 (633 aa).

Residues 1 to 18 form the signal peptide; the sequence is MHGLLLAGLLALPMNVLA. Positions 19–246 are excised as a propeptide; that stretch reads HPAEHHASNV…VHNVVDYVAS (228 aa). Residues N232 and N410 are each glycosylated (N-linked (GlcNAc...) asparagine). Zn(2+) is bound at residue H429. Residue E430 is part of the active site. H433 lines the Zn(2+) pocket. N-linked (GlcNAc...) asparagine glycans are attached at residues N480 and N622.

This sequence belongs to the peptidase M36 family. It depends on Zn(2+) as a cofactor.

It localises to the secreted. Functionally, secreted metalloproteinase that allows assimilation of proteinaceous substrates and probably acts as a virulence factor. This chain is Extracellular metalloproteinase 3 (MEP3), found in Arthroderma gypseum (strain ATCC MYA-4604 / CBS 118893) (Microsporum gypseum).